The chain runs to 305 residues: Peroxidase A2 (305 aa).

At Q1 the chain carries Pyrrolidone carboxylic acid. N3 and N13 each carry an N-linked (GlcNAc...) asparagine glycan. 4 cysteine pairs are disulfide-bonded: C11/C91, C44/C49, C97/C299, and C176/C208. The Proton acceptor role is filled by H42. Residues D43, V46, G48, D50, and S52 each coordinate Ca(2+). P139 is a binding site for substrate. N147 is a glycosylation site (N-linked (GlcNAc...) asparagine). H169 provides a ligand contact to heme b. T170 contributes to the Ca(2+) binding site. N-linked (GlcNAc...) asparagine glycans are attached at residues N185, N197, and N211. Residues D221, T224, and D229 each coordinate Ca(2+). N-linked (GlcNAc...) asparagine glycosylation is present at N267.

This sequence belongs to the peroxidase family. Classical plant (class III) peroxidase subfamily. Ca(2+) is required as a cofactor. Heme b serves as cofactor.

It carries out the reaction 2 a phenolic donor + H2O2 = 2 a phenolic radical donor + 2 H2O. In terms of biological role, removal of H(2)O(2), oxidation of toxic reductants, biosynthesis and degradation of lignin, suberization, auxin catabolism, response to environmental stresses such as wounding, pathogen attack and oxidative stress. These functions might be dependent on each isozyme/isoform in each plant tissue. The sequence is that of Peroxidase A2 (HRPA2) from Armoracia rusticana (Horseradish).